Reading from the N-terminus, the 198-residue chain is Probable GTP-binding protein EngB (198 aa).

In terms of domain architecture, EngB-type G spans 27 to 198 (DLPEVALAGR…ESWDTILSEL (172 aa)). GTP is bound by residues 35-42 (GRSNVGKS), 62-66 (GKTQL), 80-83 (DVPG), 147-150 (TKAD), and 179-181 (FSS). Residues serine 42 and threonine 64 each coordinate Mg(2+).

The protein belongs to the TRAFAC class TrmE-Era-EngA-EngB-Septin-like GTPase superfamily. EngB GTPase family. The cofactor is Mg(2+).

Its function is as follows. Necessary for normal cell division and for the maintenance of normal septation. This chain is Probable GTP-binding protein EngB, found in Streptococcus agalactiae serotype III (strain NEM316).